A 94-amino-acid chain; its full sequence is Cell division topological specificity factor (94 aa).

It belongs to the MinE family.

Its function is as follows. Prevents the cell division inhibition by proteins MinC and MinD at internal division sites while permitting inhibition at polar sites. This ensures cell division at the proper site by restricting the formation of a division septum at the midpoint of the long axis of the cell. The sequence is that of Cell division topological specificity factor from Acetivibrio thermocellus (strain ATCC 27405 / DSM 1237 / JCM 9322 / NBRC 103400 / NCIMB 10682 / NRRL B-4536 / VPI 7372) (Clostridium thermocellum).